A 736-amino-acid chain; its full sequence is Oxysterol-binding protein-related protein 9 (736 aa).

Residue A2 is modified to N-acetylalanine. The PH domain maps to 2 to 99; sequence ASIMEGPLSK…WIHALEETIL (98 aa). The segment at 231 to 367 is disordered; it reads KSEQRPSSLP…DRDDDAEAGS (137 aa). The segment covering 253–290 has biased composition (low complexity); sequence TPTPNSTGSGHSPPSSSLTSPSHVNLSPNTVPEFSYSS. 5 positions are modified to phosphoserine: S306, S324, S325, S326, and S329. 2 stretches are compositionally biased toward polar residues: residues 314 to 329 and 336 to 347; these read SSGS…SGNS and TESLNSSLSNGT. S611 is modified (phosphoserine).

It belongs to the OSBP family. Heterodimer with OSBPL11. Interacts with OSBPL10. In terms of tissue distribution, widely expressed.

The protein resides in the late endosome membrane. Its subcellular location is the golgi apparatus. It is found in the trans-Golgi network membrane. The enzyme catalyses a 1,2-diacyl-sn-glycero-3-phospho-(1D-myo-inositol 4-phosphate)(out) + a 1,2-diacyl-sn-glycero-3-phospho-L-serine(in) = a 1,2-diacyl-sn-glycero-3-phospho-(1D-myo-inositol 4-phosphate)(in) + a 1,2-diacyl-sn-glycero-3-phospho-L-serine(out). In terms of biological role, interacts with OSBPL11 to function as lipid transfer proteins. Together they form a heterodimer that localizes at the ER-trans-Golgi membrane contact sites, and exchanges phosphatidylserine (1,2-diacyl-sn-glycero-3-phospho-L-serine, PS) for phosphatidylinositol-4-phosphate (1,2-diacyl-sn-glycero-3-phospho-(1D-myo-inositol 4-phosphate), PI(4)P) between the two organelles, a step that is critical for sphingomyelin synthesis in the Golgi complex. This chain is Oxysterol-binding protein-related protein 9 (OSBPL9), found in Homo sapiens (Human).